The sequence spans 98 residues: NADH-ubiquinone oxidoreductase chain 4L (98 aa).

The next 3 helical transmembrane spans lie at 1 to 21 (MTLTYMNIMLAFAISLLGMLT), 27 to 47 (VASLLCLEGMMMSLFIMATLI), and 61 to 81 (IILLVFAACETAVGLALLISI).

The protein belongs to the complex I subunit 4L family. Core subunit of respiratory chain NADH dehydrogenase (Complex I) which is composed of 45 different subunits.

The protein resides in the mitochondrion inner membrane. It carries out the reaction a ubiquinone + NADH + 5 H(+)(in) = a ubiquinol + NAD(+) + 4 H(+)(out). Functionally, core subunit of the mitochondrial membrane respiratory chain NADH dehydrogenase (Complex I) which catalyzes electron transfer from NADH through the respiratory chain, using ubiquinone as an electron acceptor. Part of the enzyme membrane arm which is embedded in the lipid bilayer and involved in proton translocation. The protein is NADH-ubiquinone oxidoreductase chain 4L (MT-ND4L) of Macaca mulatta (Rhesus macaque).